A 441-amino-acid polypeptide reads, in one-letter code: Ribulose bisphosphate carboxylase large chain (441 aa).

The substrate site is built by Asn89 and Thr139. The Proton acceptor role is filled by Lys141. Residue Lys143 coordinates substrate. Mg(2+)-binding residues include Lys167, Asp169, and Glu170. Lys167 bears the N6-carboxylysine mark. The active-site Proton acceptor is His260. Xaa261, His293, and Ser345 together coordinate substrate.

This sequence belongs to the RuBisCO large chain family. Type I subfamily. As to quaternary structure, heterohexadecamer of 8 large chains and 8 small chains; disulfide-linked. The disulfide link is formed within the large subunit homodimers. Mg(2+) serves as cofactor. Post-translationally, the disulfide bond which can form in the large chain dimeric partners within the hexadecamer appears to be associated with oxidative stress and protein turnover.

The protein localises to the plastid. The protein resides in the chloroplast. It catalyses the reaction 2 (2R)-3-phosphoglycerate + 2 H(+) = D-ribulose 1,5-bisphosphate + CO2 + H2O. The enzyme catalyses D-ribulose 1,5-bisphosphate + O2 = 2-phosphoglycolate + (2R)-3-phosphoglycerate + 2 H(+). RuBisCO catalyzes two reactions: the carboxylation of D-ribulose 1,5-bisphosphate, the primary event in carbon dioxide fixation, as well as the oxidative fragmentation of the pentose substrate in the photorespiration process. Both reactions occur simultaneously and in competition at the same active site. The polypeptide is Ribulose bisphosphate carboxylase large chain (Apocynum cannabinum (Hemp dogbane)).